Consider the following 165-residue polypeptide: Biosynthetic peptidoglycan transglycosylase (165 aa).

This sequence belongs to the glycosyltransferase 51 family.

It is found in the cell inner membrane. The enzyme catalyses [GlcNAc-(1-&gt;4)-Mur2Ac(oyl-L-Ala-gamma-D-Glu-L-Lys-D-Ala-D-Ala)](n)-di-trans,octa-cis-undecaprenyl diphosphate + beta-D-GlcNAc-(1-&gt;4)-Mur2Ac(oyl-L-Ala-gamma-D-Glu-L-Lys-D-Ala-D-Ala)-di-trans,octa-cis-undecaprenyl diphosphate = [GlcNAc-(1-&gt;4)-Mur2Ac(oyl-L-Ala-gamma-D-Glu-L-Lys-D-Ala-D-Ala)](n+1)-di-trans,octa-cis-undecaprenyl diphosphate + di-trans,octa-cis-undecaprenyl diphosphate + H(+). The protein operates within cell wall biogenesis; peptidoglycan biosynthesis. Peptidoglycan polymerase that catalyzes glycan chain elongation from lipid-linked precursors. This Neisseria meningitidis protein is Biosynthetic peptidoglycan transglycosylase.